A 506-amino-acid polypeptide reads, in one-letter code: Aldehyde dehydrogenase (506 aa).

Residue 218–224 (GFGLEAG) participates in NAD(+) binding. Active-site residues include glutamate 262 and cysteine 301.

The protein belongs to the aldehyde dehydrogenase family.

It catalyses the reaction an aldehyde + NAD(+) + H2O = a carboxylate + NADH + 2 H(+). The polypeptide is Aldehyde dehydrogenase (Rhodospirillum rubrum (strain ATCC 11170 / ATH 1.1.1 / DSM 467 / LMG 4362 / NCIMB 8255 / S1)).